The primary structure comprises 1448 residues: ABC transporter G family member 9 (1448 aa).

The segment covering 16–28 has biased composition (polar residues); it reads EGGSNLNINTPSG. The segment at 16–41 is disordered; the sequence is EGGSNLNINTPSGMSDGDFNSGANSP. The region spanning 136–385 is the ABC transporter 1 domain; sequence LFKPSTWKIE…FLDLGFDCEP (250 aa). Residues 490–717 enclose the ABC transmembrane type-2 1 domain; sequence WGDKFSLVSR…APYDNSVRVC (228 aa). 7 consecutive transmembrane segments (helical) span residues 494-514, 530-550, 579-599, 604-624, 634-654, 663-683, and 748-768; these read FSLV…GSVF, AIFA…FATF, IPLT…MFGL, GKFF…TNMF, LYVS…YCGY, PWFG…ALMA, and LNIF…MVAV. An ABC transporter 2 domain is found at 822 to 1066; sequence FTWENIKYTV…LTSYFERQGV (245 aa). An ATP-binding site is contributed by 858 to 865; sequence GSSGAGKT. Helical transmembrane passes span 1157–1177, 1191–1211, 1233–1253, 1272–1292, 1299–1319, and 1422–1442; these read FYAY…GFTF, IFFI…VMVQ, FAIS…SVFF, FYFW…GGAI, MFLA…FCGV, and IAIL…FVYL. The ABC transmembrane type-2 2 domain maps to 1157–1389; that stretch reads FYAYGSILQA…VPATGYVTNT (233 aa).

It belongs to the ABC transporter superfamily. ABCG family. PDR (TC 3.A.1.205) subfamily.

Its subcellular location is the membrane. The chain is ABC transporter G family member 9 (abcG9) from Dictyostelium discoideum (Social amoeba).